Consider the following 270-residue polypeptide: Phosphatidylglycerol--prolipoprotein diacylglyceryl transferase (270 aa).

The next 4 helical transmembrane spans lie at 19–39 (FPVY…LWLA), 56–76 (LVLI…VIFE), 92–112 (QGGL…VLFA), and 116–136 (GLSF…GQAI). R138 is a binding site for a 1,2-diacyl-sn-glycero-3-phospho-(1'-sn-glycerol). A run of 3 helical transmembrane segments spans residues 178–198 (HPTF…LLAL), 206–226 (GELF…VEGL), and 236–256 (LRIA…FIIV).

The protein belongs to the Lgt family.

Its subcellular location is the cell membrane. It carries out the reaction L-cysteinyl-[prolipoprotein] + a 1,2-diacyl-sn-glycero-3-phospho-(1'-sn-glycerol) = an S-1,2-diacyl-sn-glyceryl-L-cysteinyl-[prolipoprotein] + sn-glycerol 1-phosphate + H(+). The protein operates within protein modification; lipoprotein biosynthesis (diacylglyceryl transfer). In terms of biological role, catalyzes the transfer of the diacylglyceryl group from phosphatidylglycerol to the sulfhydryl group of the N-terminal cysteine of a prolipoprotein, the first step in the formation of mature lipoproteins. The protein is Phosphatidylglycerol--prolipoprotein diacylglyceryl transferase of Bacillus cereus (strain ATCC 14579 / DSM 31 / CCUG 7414 / JCM 2152 / NBRC 15305 / NCIMB 9373 / NCTC 2599 / NRRL B-3711).